Here is a 359-residue protein sequence, read N- to C-terminus: Membrane-bound lytic murein transglycosylase C (359 aa).

The first 16 residues, 1-16 (MKKYLALALIAPLLIS), serve as a signal peptide directing secretion. Cys17 carries N-palmitoyl cysteine lipidation. Cys17 carries the S-diacylglycerol cysteine lipid modification.

This sequence belongs to the transglycosylase Slt family.

Its subcellular location is the cell outer membrane. It carries out the reaction Exolytic cleavage of the (1-&gt;4)-beta-glycosidic linkage between N-acetylmuramic acid (MurNAc) and N-acetylglucosamine (GlcNAc) residues in peptidoglycan, from either the reducing or the non-reducing ends of the peptidoglycan chains, with concomitant formation of a 1,6-anhydrobond in the MurNAc residue.. Functionally, murein-degrading enzyme. May play a role in recycling of muropeptides during cell elongation and/or cell division. The protein is Membrane-bound lytic murein transglycosylase C of Shigella flexneri serotype 5b (strain 8401).